The primary structure comprises 255 residues: D-aminoacyl-tRNA deacylase (255 aa).

This sequence belongs to the DtdA deacylase family. Monomer. Zn(2+) serves as cofactor.

It carries out the reaction a D-aminoacyl-tRNA + H2O = a tRNA + a D-alpha-amino acid + H(+). The enzyme catalyses glycyl-tRNA(Ala) + H2O = tRNA(Ala) + glycine + H(+). In terms of biological role, D-aminoacyl-tRNA deacylase with broad substrate specificity. By recycling D-aminoacyl-tRNA to D-amino acids and free tRNA molecules, this enzyme counteracts the toxicity associated with the formation of D-aminoacyl-tRNA entities in vivo. The chain is D-aminoacyl-tRNA deacylase from Picrophilus torridus (strain ATCC 700027 / DSM 9790 / JCM 10055 / NBRC 100828 / KAW 2/3).